The sequence spans 254 residues: Winged helix repair factor 1 (254 aa).

The Bipartite nuclear localization signal signature appears at 4–21; it reads KRRLLASEAFGVKRRRAP. Winged helix domain stretches follow at residues 32–104, 120–179, and 180–254; these read RAGS…GIVF, PCAG…LAVP, and GAGR…LPDT.

It belongs to the STK19 family. Monomer in solution. Homodimer; when bound to DNA. Component of a transcription-coupled nucleotide excision repair (TC-NER) complex composed of STK19, ERCC6, ERCC8, DDA1, DDB1, ELOF1 and UVSSA which assembles and interacts with the multiprotein RNA polymerase II complex when it stalls at DNA lesions.

The protein resides in the nucleus. In terms of biological role, DNA-binding protein which is required for efficient transcription-coupled nucleotide excision repair (TC-NER). Acts as part of a TC-NER complex which assembles and interacts with RNA polymerase II (RNAPII) when it stalls at DNA lesions. TC-NER complex subunit UVSSA binds to the GTF2H1/p62 subunit of the TFIIH transcription factor complex, tethering TFIIH to the TC-NER complex. WHR1/STK19 then interacts with the XPD helicase subunit of TFIIH which guides TFIIH to DNA downstream of the stalled RNAPII, ensuring DNA repair. Directly interacts with RNAPII and also binds to downstream DNA. Promotes the timely removal of DNA damage-stalled RNAPII, allowing downstream NER factors to access DNA lesions. Required for monoubiquitination of UVSSA. Regulates repositioning and stabilization of UVSSA within the TC-NER complex. Stimulates ubiquitination of RNAPII complex member RBP1. Also binds to RNA and regulates the expression levels of many mRNAs. The chain is Winged helix repair factor 1 from Mus musculus (Mouse).